The chain runs to 87 residues: Phosphocarrier protein HPr (87 aa).

An HPr domain is found at A2 to A87. The Pros-phosphohistidine intermediate role is filled by H15. Phosphoserine; by HPrK/P is present on S46.

It belongs to the HPr family.

The protein resides in the cytoplasm. Phosphorylation on Ser-46 inhibits the phosphoryl transfer from enzyme I to HPr. General (non sugar-specific) component of the phosphoenolpyruvate-dependent sugar phosphotransferase system (sugar PTS). This major carbohydrate active-transport system catalyzes the phosphorylation of incoming sugar substrates concomitantly with their translocation across the cell membrane. The phosphoryl group from phosphoenolpyruvate (PEP) is transferred to the phosphoryl carrier protein HPr by enzyme I. Phospho-HPr then transfers it to the PTS EIIA domain. In terms of biological role, P-Ser-HPr interacts with the catabolite control protein A (CcpA), forming a complex that binds to DNA at the catabolite response elements cre, operator sites preceding a large number of catabolite-regulated genes. Thus, P-Ser-HPr is a corepressor in carbon catabolite repression (CCR), a mechanism that allows bacteria to coordinate and optimize the utilization of available carbon sources. P-Ser-HPr also plays a role in inducer exclusion, in which it probably interacts with several non-PTS permeases and inhibits their transport activity. The polypeptide is Phosphocarrier protein HPr (ptsH) (Streptococcus mutans serotype c (strain ATCC 700610 / UA159)).